The primary structure comprises 120 residues: Protein BEX4 (120 aa).

The segment at 1–54 (MESKEELAANNLNGENAQQENEGGEQAPTQNEEESRHLGGGEGQKPGGNIRRGR) is disordered. The segment covering 8 to 27 (AANNLNGENAQQENEGGEQA) has biased composition (low complexity). The segment at 31-90 (NEEESRHLGGGEGQKPGGNIRRGRVRRLVPNFRWAIPNRHIEHNEARDDVERFVGQMMEI) is interaction with SIRT2. Residues 31–120 (NEEESRHLGG…DNHYDFCLIP (90 aa)) form an interaction with alpha-tubulin region. Cys-117 serves as a coordination point for Zn(2+).

The protein belongs to the BEX family. Interacts with alpha-tubulin. Interacts with SIRT2. Post-translationally, ubiquitinated and degraded by the proteasome. Very high expression in heart, skeletal muscle, liver, and kidney. The levels of expression are uniform throughout the brain.

It is found in the cytoplasm. Its subcellular location is the cytoskeleton. The protein localises to the spindle pole. The protein resides in the nucleus. In terms of biological role, may play a role in microtubule deacetylation by negatively regulating the SIRT2 deacetylase activity toward alpha-tubulin and thereby participate in the control of cell cycle progression and genomic stability. In absence of reductive stress, acts as a pseudosubstrate for the CRL2(FEM1B) complex: associates with FEM1B via zinc, thereby preventing association between FEM1B and its substrates. The chain is Protein BEX4 from Homo sapiens (Human).